We begin with the raw amino-acid sequence, 663 residues long: Bifunctional polymyxin resistance protein ArnA (663 aa).

The interval 1–307 is formyltransferase ArnAFT; that stretch reads MSSKAVVFAY…ELGLVDGSVL (307 aa). Residue His106 is the Proton donor; for formyltransferase activity of the active site. (6R)-10-formyltetrahydrofolate is bound by residues Arg116 and 138–142; that span reads VKRAD. The segment at 317–663 is dehydrogenase ArnADH; the sequence is RRTRVLILGV…EAMLEIADKK (347 aa). Residues Asp350 and 371 to 372 contribute to the NAD(+) site; that span reads DI. Residues Ala396, Tyr401, and 435–436 contribute to the UDP-alpha-D-glucuronate site; that span reads TS. The Proton acceptor; for decarboxylase activity role is filled by Glu437. Residues Arg463, Asn494, 528–537, and Tyr615 contribute to the UDP-alpha-D-glucuronate site; that span reads RLFDGGEQKR. Catalysis depends on Arg621, which acts as the Proton donor; for decarboxylase activity.

This sequence in the N-terminal section; belongs to the Fmt family. UDP-L-Ara4N formyltransferase subfamily. The protein in the C-terminal section; belongs to the NAD(P)-dependent epimerase/dehydratase family. UDP-glucuronic acid decarboxylase subfamily. Homohexamer, formed by a dimer of trimers.

It catalyses the reaction UDP-alpha-D-glucuronate + NAD(+) = UDP-beta-L-threo-pentopyranos-4-ulose + CO2 + NADH. The catalysed reaction is UDP-4-amino-4-deoxy-beta-L-arabinose + (6R)-10-formyltetrahydrofolate = UDP-4-deoxy-4-formamido-beta-L-arabinose + (6S)-5,6,7,8-tetrahydrofolate + H(+). Its pathway is nucleotide-sugar biosynthesis; UDP-4-deoxy-4-formamido-beta-L-arabinose biosynthesis; UDP-4-deoxy-4-formamido-beta-L-arabinose from UDP-alpha-D-glucuronate: step 1/3. The protein operates within nucleotide-sugar biosynthesis; UDP-4-deoxy-4-formamido-beta-L-arabinose biosynthesis; UDP-4-deoxy-4-formamido-beta-L-arabinose from UDP-alpha-D-glucuronate: step 3/3. It participates in bacterial outer membrane biogenesis; lipopolysaccharide biosynthesis. Bifunctional enzyme that catalyzes the oxidative decarboxylation of UDP-glucuronic acid (UDP-GlcUA) to UDP-4-keto-arabinose (UDP-Ara4O) and the addition of a formyl group to UDP-4-amino-4-deoxy-L-arabinose (UDP-L-Ara4N) to form UDP-L-4-formamido-arabinose (UDP-L-Ara4FN). The modified arabinose is attached to lipid A and is required for resistance to polymyxin and cationic antimicrobial peptides. This Pseudomonas fluorescens (strain SBW25) protein is Bifunctional polymyxin resistance protein ArnA.